The sequence spans 316 residues: Protein PXR1 (316 aa).

The G-patch domain maps to 25 to 71 (TSRFGHQYLERMGWKPGKGLGLVEHATTSHVKVSIKDDNLGLGSKLA). The disordered stretch occupies residues 146-280 (GTTKKRKIDS…DSMLMPKEQL (135 aa)). Basic and acidic residues predominate over residues 179–195 (DRKEKEEKKTEKENSEI). A compositionally biased stretch (basic residues) spans 196–209 (KKKKKEKKEKKEKK). The segment covering 210–240 (EKKDKNEKKEKKDKNEKKEKKDKNEEKEKKE) has biased composition (basic and acidic residues). Residues 241–260 (KKEKKEKKDKKDKKDKKDKK) are compositionally biased toward basic residues. The segment covering 261 to 270 (EKKEVKEVTR) has biased composition (basic and acidic residues).

Belongs to the PINX1 family.

Its subcellular location is the nucleus. It is found in the nucleolus. Functionally, involved in rRNA-processing at A0, A1 and A2 sites and negatively regulates telomerase. The sequence is that of Protein PXR1 (PXR1) from Debaryomyces hansenii (strain ATCC 36239 / CBS 767 / BCRC 21394 / JCM 1990 / NBRC 0083 / IGC 2968) (Yeast).